We begin with the raw amino-acid sequence, 426 residues long: Proline--tRNA ligase (426 aa).

Belongs to the class-II aminoacyl-tRNA synthetase family. ProS type 2 subfamily. In terms of assembly, homodimer.

The protein resides in the cytoplasm. It catalyses the reaction tRNA(Pro) + L-proline + ATP = L-prolyl-tRNA(Pro) + AMP + diphosphate. Functionally, catalyzes the attachment of proline to tRNA(Pro) in a two-step reaction: proline is first activated by ATP to form Pro-AMP and then transferred to the acceptor end of tRNA(Pro). In Rickettsia peacockii (strain Rustic), this protein is Proline--tRNA ligase.